The primary structure comprises 182 residues: Large ribosomal subunit protein uL5c (182 aa).

Belongs to the universal ribosomal protein uL5 family. Part of the 50S ribosomal subunit; contacts the 5S rRNA.

The protein localises to the plastid. Its subcellular location is the chloroplast. Its function is as follows. Binds 5S rRNA, forms part of the central protuberance of the 50S subunit. The sequence is that of Large ribosomal subunit protein uL5c (rpl5) from Cyanidium caldarium (Red alga).